We begin with the raw amino-acid sequence, 404 residues long: Probable tRNA sulfurtransferase (404 aa).

In terms of domain architecture, THUMP spans 61–166 (EAVSERLKDV…SGYSYIMCDE (106 aa)). ATP contacts are provided by residues 184 to 185 (LL), 209 to 210 (HF), R266, G288, and Q297.

This sequence belongs to the ThiI family.

It localises to the cytoplasm. The catalysed reaction is [ThiI sulfur-carrier protein]-S-sulfanyl-L-cysteine + a uridine in tRNA + 2 reduced [2Fe-2S]-[ferredoxin] + ATP + H(+) = [ThiI sulfur-carrier protein]-L-cysteine + a 4-thiouridine in tRNA + 2 oxidized [2Fe-2S]-[ferredoxin] + AMP + diphosphate. It carries out the reaction [ThiS sulfur-carrier protein]-C-terminal Gly-Gly-AMP + S-sulfanyl-L-cysteinyl-[cysteine desulfurase] + AH2 = [ThiS sulfur-carrier protein]-C-terminal-Gly-aminoethanethioate + L-cysteinyl-[cysteine desulfurase] + A + AMP + 2 H(+). It functions in the pathway cofactor biosynthesis; thiamine diphosphate biosynthesis. Catalyzes the ATP-dependent transfer of a sulfur to tRNA to produce 4-thiouridine in position 8 of tRNAs, which functions as a near-UV photosensor. Also catalyzes the transfer of sulfur to the sulfur carrier protein ThiS, forming ThiS-thiocarboxylate. This is a step in the synthesis of thiazole, in the thiamine biosynthesis pathway. The sulfur is donated as persulfide by IscS. The sequence is that of Probable tRNA sulfurtransferase from Bacillus cereus (strain B4264).